The sequence spans 42 residues: Crotamine-IV-3 (42 aa).

Disulfide bonds link Cys4-Cys37, Cys11-Cys31, and Cys19-Cys38.

Belongs to the crotamine-myotoxin family. Monomer. As to expression, expressed by the venom gland.

It is found in the secreted. Its function is as follows. Cationic peptide that possesses multiple functions. It acts as a cell-penetrating peptide (CPP), and as a potent voltage-gated potassium channel (Kv) inhibitor. It exhibits antimicrobial activities, and hind limb paralysis. It also induces potent blockade of neuromuscular transmission in young chicken biventer cervicis preparation and potent myotoxic effect. In mice, it induces myonecrosis, upon intramuscular or subcutaneous injections. The protein is Crotamine-IV-3 of Crotalus durissus cumanensis (South American rattlesnake).